A 184-amino-acid polypeptide reads, in one-letter code: ATP synthase subunit delta (184 aa).

Belongs to the ATPase delta chain family. As to quaternary structure, F-type ATPases have 2 components, F(1) - the catalytic core - and F(0) - the membrane proton channel. F(1) has five subunits: alpha(3), beta(3), gamma(1), delta(1), epsilon(1). F(0) has three main subunits: a(1), b(2) and c(10-14). The alpha and beta chains form an alternating ring which encloses part of the gamma chain. F(1) is attached to F(0) by a central stalk formed by the gamma and epsilon chains, while a peripheral stalk is formed by the delta and b chains.

It localises to the cell inner membrane. Its function is as follows. F(1)F(0) ATP synthase produces ATP from ADP in the presence of a proton or sodium gradient. F-type ATPases consist of two structural domains, F(1) containing the extramembraneous catalytic core and F(0) containing the membrane proton channel, linked together by a central stalk and a peripheral stalk. During catalysis, ATP synthesis in the catalytic domain of F(1) is coupled via a rotary mechanism of the central stalk subunits to proton translocation. In terms of biological role, this protein is part of the stalk that links CF(0) to CF(1). It either transmits conformational changes from CF(0) to CF(1) or is implicated in proton conduction. This is ATP synthase subunit delta from Rickettsia felis (strain ATCC VR-1525 / URRWXCal2) (Rickettsia azadi).